The sequence spans 184 residues: Large ribosomal subunit protein uL6 (184 aa).

The protein belongs to the universal ribosomal protein uL6 family. Part of the 50S ribosomal subunit.

Functionally, this protein binds to the 23S rRNA, and is important in its secondary structure. It is located near the subunit interface in the base of the L7/L12 stalk, and near the tRNA binding site of the peptidyltransferase center. This is Large ribosomal subunit protein uL6 from Pyrococcus furiosus (strain ATCC 43587 / DSM 3638 / JCM 8422 / Vc1).